The following is a 347-amino-acid chain: Coproporphyrinogen-III oxidase, aerobic 2 (347 aa).

Positions 1–31 (MGRHSDNSLQESANHTVLLTSPTNTIPKDSR) are disordered. Residues 7-31 (NSLQESANHTVLLTSPTNTIPKDSR) show a composition bias toward polar residues. Positions 75–84 (VIREGRVFEQ) are important for dimerization. Ser-119 provides a ligand contact to substrate. Residue His-133 is the Proton donor of the active site. Substrate contacts are provided by residues 135–137 (NYR) and 305–310 (KGRTES). The interval 287-322 (YVEFNLVYDRGTVFGLQTKGRTESILMSLPPLARWE) is important for dimerization.

Belongs to the aerobic coproporphyrinogen-III oxidase family. In terms of assembly, homodimer.

Its subcellular location is the cytoplasm. It catalyses the reaction coproporphyrinogen III + O2 + 2 H(+) = protoporphyrinogen IX + 2 CO2 + 2 H2O. Its pathway is porphyrin-containing compound metabolism; protoporphyrin-IX biosynthesis; protoporphyrinogen-IX from coproporphyrinogen-III (O2 route): step 1/1. In terms of biological role, key enzyme in heme biosynthesis. Catalyzes the oxidative decarboxylation of propionic acid side chains of rings A and B of coproporphyrinogen III. The sequence is that of Coproporphyrinogen-III oxidase, aerobic 2 from Nostoc sp. (strain PCC 7120 / SAG 25.82 / UTEX 2576).